The primary structure comprises 672 residues: MLKVTTAHIHFNRDNTPVSEQFDDIYFSTADGLEESRYVFQEGNNLWRRWLQFGENHFVIAETGFGTGLNFLAVTALFREFRTQYPDSPLKRLFFISFEKYPMSCADLRSAHQAYPQFNSLAEQLRQNWLQPIVGCYRFHFEETVLDLWFGDIADNLPQLGDYMVNKIDAWFLDGFAPSKNPEMWNENLYKQMFRYTKPAGTFATFTAASAVKKGLESAGFSLQKRKGFGKKRECLQGFKPLNAEQNPAVHTPWLLSRSATLSENTDIAIIGGGISSLFSAISLLQRGANVTLYCEDEQPALNASGNKQGAFYPQLSDDDIHNIRFYIHAFAYGQQQLRWAIQQGIEFEHEFCGVALCAYDEKSAVKLAKISDYDWDTSLYQPLNQQELSEKAGLPLPCGGGFIPQGAWLAPRQFVQNGFAFAQKCGLKLKTFEKITALSQSEKGWILHNDKNEQFHHETVIIANGHKLKQFTQTARIPVYSVRGQVSQIPTSSQLLKLKSVLCYDGYLTPADQAKQFHCIGASHVRDCEDRDFSLQEQQENQAKIQLNIAEDWTKEVNTADNLARTGIRCAVRDRIPLVGNVPDFERQADEYRNIFNLRRRKQFIPQAAVFENLYLVGALGSRGLTSAPLLGEILASMIYGEPIPLSEDILHCLNPNRSWMRKLLKGTPVK.

The tract at residues Met-1 to Pro-241 is tRNA (mnm(5)s(2)U34)-methyltransferase. Residues Ile-271–Lys-672 are FAD-dependent cmnm(5)s(2)U34 oxidoreductase.

In the N-terminal section; belongs to the methyltransferase superfamily. tRNA (mnm(5)s(2)U34)-methyltransferase family. This sequence in the C-terminal section; belongs to the DAO family. FAD is required as a cofactor.

It localises to the cytoplasm. The enzyme catalyses 5-aminomethyl-2-thiouridine(34) in tRNA + S-adenosyl-L-methionine = 5-methylaminomethyl-2-thiouridine(34) in tRNA + S-adenosyl-L-homocysteine + H(+). In terms of biological role, catalyzes the last two steps in the biosynthesis of 5-methylaminomethyl-2-thiouridine (mnm(5)s(2)U) at the wobble position (U34) in tRNA. Catalyzes the FAD-dependent demodification of cmnm(5)s(2)U34 to nm(5)s(2)U34, followed by the transfer of a methyl group from S-adenosyl-L-methionine to nm(5)s(2)U34, to form mnm(5)s(2)U34. This Mannheimia succiniciproducens (strain KCTC 0769BP / MBEL55E) protein is tRNA 5-methylaminomethyl-2-thiouridine biosynthesis bifunctional protein MnmC.